Reading from the N-terminus, the 470-residue chain is Nuclear receptor ROR-beta (470 aa).

Residues V18–F93 constitute a DNA-binding region (nuclear receptor). 2 NR C4-type zinc fingers span residues C21 to C41 and C57 to C81. A compositionally biased stretch (basic and acidic residues) spans L104–E117. A disordered region spans residues L104–E127. Residues E222–L460 form the NR LBD domain. The AF-2 motif lies at L456–F461.

It belongs to the nuclear hormone receptor family. NR1 subfamily. In terms of assembly, monomer. Interacts with CRX. Expressed in inner and outer neuroblastic layer as well as in the ganglion cell layer of the developing retina. Expressed in bone marrow osteoprogenitor cells.

The protein resides in the nucleus. It is found in the nucleoplasm. Functionally, nuclear receptor that binds DNA as a monomer to ROR response elements (RORE) containing a single core motif half-site 5'-AGGTCA-3' preceded by a short A-T-rich sequence. Considered to have intrinsic transcriptional activity, have some natural ligands such as all-trans retinoic acid (ATRA) and other retinoids which act as inverse agonists repressing the transcriptional activity. Required for normal postnatal development of rod and cone photoreceptor cells. Modulates rod photoreceptors differentiation at least by inducing the transcription factor NRL-mediated pathway. In cone photoreceptor cells, regulates transcription of OPN1SW. Involved in the regulation of the period length and stability of the circadian rhythm. May control cytoarchitectural patterning of neocortical neurons during development. May act in a dose-dependent manner to regulate barrel formation upon innervation of layer IV neurons by thalamocortical axons. May play a role in the suppression of osteoblastic differentiation through the inhibition of RUNX2 transcriptional activity. Its function is as follows. Isoform 1 is critical for hindlimb motor control and for the differentiation of amacrine and horizontal cells in the retina. Regulates the expression of PTF1A synergistically with FOXN4. The sequence is that of Nuclear receptor ROR-beta (Rorb) from Mus musculus (Mouse).